Reading from the N-terminus, the 228-residue chain is uncharacterized protein (228 aa).

Helical transmembrane passes span 37-54, 67-89, 104-126, and 138-160; these read WCMH…TLIV, VVSI…STGV, HIGI…TSRL, and VLHV…LVLY.

The protein resides in the cell membrane. This is an uncharacterized protein from Treponema pallidum (strain Nichols).